Here is a 210-residue protein sequence, read N- to C-terminus: ATP phosphoribosyltransferase (210 aa).

Belongs to the ATP phosphoribosyltransferase family. Short subfamily. As to quaternary structure, heteromultimer composed of HisG and HisZ subunits.

The protein localises to the cytoplasm. It catalyses the reaction 1-(5-phospho-beta-D-ribosyl)-ATP + diphosphate = 5-phospho-alpha-D-ribose 1-diphosphate + ATP. The protein operates within amino-acid biosynthesis; L-histidine biosynthesis; L-histidine from 5-phospho-alpha-D-ribose 1-diphosphate: step 1/9. In terms of biological role, catalyzes the condensation of ATP and 5-phosphoribose 1-diphosphate to form N'-(5'-phosphoribosyl)-ATP (PR-ATP). Has a crucial role in the pathway because the rate of histidine biosynthesis seems to be controlled primarily by regulation of HisG enzymatic activity. This is ATP phosphoribosyltransferase from Petrotoga mobilis (strain DSM 10674 / SJ95).